We begin with the raw amino-acid sequence, 447 residues long: Adenylosuccinate synthetase (447 aa).

Residues 35–41 (GDEGKGK) and 63–65 (GHT) contribute to the GTP site. D36 (proton acceptor) is an active-site residue. Positions 36 and 63 each coordinate Mg(2+). Residues 36 to 39 (DEGK), 61 to 64 (NAGH), T153, R167, N245, T260, and R324 contribute to the IMP site. H64 (proton donor) is an active-site residue. Position 320-326 (320-326 (VTTKRKR)) interacts with substrate. GTP is bound by residues R326, 352–354 (KLD), and 435–437 (GVG).

This sequence belongs to the adenylosuccinate synthetase family. As to quaternary structure, homodimer. Mg(2+) serves as cofactor.

Its subcellular location is the cytoplasm. The catalysed reaction is IMP + L-aspartate + GTP = N(6)-(1,2-dicarboxyethyl)-AMP + GDP + phosphate + 2 H(+). It functions in the pathway purine metabolism; AMP biosynthesis via de novo pathway; AMP from IMP: step 1/2. Its function is as follows. Plays an important role in the de novo pathway and in the salvage pathway of purine nucleotide biosynthesis. Catalyzes the first committed step in the biosynthesis of AMP from IMP. This is Adenylosuccinate synthetase from Drosophila sechellia (Fruit fly).